The sequence spans 125 residues: S-adenosylmethionine decarboxylase proenzyme (125 aa).

Catalysis depends on Ser71, which acts as the Schiff-base intermediate with substrate; via pyruvic acid. Ser71 bears the Pyruvic acid (Ser); by autocatalysis mark. His76 functions as the Proton acceptor; for processing activity in the catalytic mechanism. Catalysis depends on Cys91, which acts as the Proton donor; for catalytic activity.

This sequence belongs to the prokaryotic AdoMetDC family. Type 1 subfamily. Heterotetramer of two alpha and two beta chains arranged as a dimer of alpha/beta heterodimers. The cofactor is pyruvate. Post-translationally, is synthesized initially as an inactive proenzyme. Formation of the active enzyme involves a self-maturation process in which the active site pyruvoyl group is generated from an internal serine residue via an autocatalytic post-translational modification. Two non-identical subunits are generated from the proenzyme in this reaction, and the pyruvate is formed at the N-terminus of the alpha chain, which is derived from the carboxyl end of the proenzyme. The post-translation cleavage follows an unusual pathway, termed non-hydrolytic serinolysis, in which the side chain hydroxyl group of the serine supplies its oxygen atom to form the C-terminus of the beta chain, while the remainder of the serine residue undergoes an oxidative deamination to produce ammonia and the pyruvoyl group blocking the N-terminus of the alpha chain.

It carries out the reaction S-adenosyl-L-methionine + H(+) = S-adenosyl 3-(methylsulfanyl)propylamine + CO2. Its pathway is amine and polyamine biosynthesis; S-adenosylmethioninamine biosynthesis; S-adenosylmethioninamine from S-adenosyl-L-methionine: step 1/1. Catalyzes the decarboxylation of S-adenosylmethionine to S-adenosylmethioninamine (dcAdoMet), the propylamine donor required for the synthesis of the polyamines spermine and spermidine from the diamine putrescine. This Pyrobaculum aerophilum (strain ATCC 51768 / DSM 7523 / JCM 9630 / CIP 104966 / NBRC 100827 / IM2) protein is S-adenosylmethionine decarboxylase proenzyme.